Here is a 388-residue protein sequence, read N- to C-terminus: Galactokinase (388 aa).

33–36 is a binding site for substrate; that stretch reads EHTD. ATP contacts are provided by residues Ser-67 and 125–131; that span reads GAGLSSS. The Mg(2+) site is built by Ser-131 and Glu-163. Catalysis depends on Asp-175, which acts as the Proton acceptor. Position 225 (Tyr-225) interacts with substrate.

It belongs to the GHMP kinase family. GalK subfamily.

The protein resides in the cytoplasm. It catalyses the reaction alpha-D-galactose + ATP = alpha-D-galactose 1-phosphate + ADP + H(+). It functions in the pathway carbohydrate metabolism; galactose metabolism. Catalyzes the transfer of the gamma-phosphate of ATP to D-galactose to form alpha-D-galactose-1-phosphate (Gal-1-P). In Limosilactobacillus fermentum (strain NBRC 3956 / LMG 18251) (Lactobacillus fermentum), this protein is Galactokinase.